The primary structure comprises 401 residues: Anhydro-N-acetylmuramic acid kinase (401 aa).

ATP is bound at residue glycine 25 to aspartate 32.

Belongs to the anhydro-N-acetylmuramic acid kinase family.

It catalyses the reaction 1,6-anhydro-N-acetyl-beta-muramate + ATP + H2O = N-acetyl-D-muramate 6-phosphate + ADP + H(+). It participates in amino-sugar metabolism; 1,6-anhydro-N-acetylmuramate degradation. It functions in the pathway cell wall biogenesis; peptidoglycan recycling. Catalyzes the specific phosphorylation of 1,6-anhydro-N-acetylmuramic acid (anhMurNAc) with the simultaneous cleavage of the 1,6-anhydro ring, generating MurNAc-6-P. Is required for the utilization of anhMurNAc either imported from the medium or derived from its own cell wall murein, and thus plays a role in cell wall recycling. This is Anhydro-N-acetylmuramic acid kinase from Pseudoalteromonas atlantica (strain T6c / ATCC BAA-1087).